Here is an 844-residue protein sequence, read N- to C-terminus: Protein translocase subunit SecA 1 (844 aa).

ATP is bound by residues Q91, 109–113, and D498; that span reads GEGKT. Over residues 793–813 the composition is skewed to basic and acidic residues; the sequence is KSKSFGEAKHVTAEDGKEKAK. The tract at residues 793–825 is disordered; it reads KSKSFGEAKHVTAEDGKEKAKPQPIVKGDQVGR. Residues C829, C831, C840, and H841 each contribute to the Zn(2+) site.

The protein belongs to the SecA family. As to quaternary structure, monomer and homodimer. Part of the essential Sec protein translocation apparatus which comprises SecA, SecYEG and auxiliary proteins SecDF. Other proteins may also be involved. Requires Zn(2+) as cofactor.

It localises to the cell membrane. The protein localises to the cytoplasm. It carries out the reaction ATP + H2O + cellular proteinSide 1 = ADP + phosphate + cellular proteinSide 2.. Functionally, part of the Sec protein translocase complex. Interacts with the SecYEG preprotein conducting channel. Has a central role in coupling the hydrolysis of ATP to the transfer of proteins into and across the cell membrane, serving as an ATP-driven molecular motor driving the stepwise translocation of polypeptide chains across the membrane. In Staphylococcus epidermidis (strain ATCC 35984 / DSM 28319 / BCRC 17069 / CCUG 31568 / BM 3577 / RP62A), this protein is Protein translocase subunit SecA 1.